Reading from the N-terminus, the 67-residue chain is MPKMKTKSSAKKRFKITASGKVKVAAAGKRHGMIKRSNKFIRDARGTMVLSDQDAKKVIQYYLPNGF.

It belongs to the bacterial ribosomal protein bL35 family.

The polypeptide is Large ribosomal subunit protein bL35 (Bartonella quintana (strain Toulouse) (Rochalimaea quintana)).